We begin with the raw amino-acid sequence, 139 residues long: Ribosome-binding factor A (139 aa).

Residues 112–139 (EARTQGQAAPAPDVEPAPGAAPDDEAEE) are disordered. Residues 119 to 132 (AAPAPDVEPAPGAA) show a composition bias toward low complexity.

It belongs to the RbfA family. Monomer. Binds 30S ribosomal subunits, but not 50S ribosomal subunits or 70S ribosomes.

It localises to the cytoplasm. Functionally, one of several proteins that assist in the late maturation steps of the functional core of the 30S ribosomal subunit. Associates with free 30S ribosomal subunits (but not with 30S subunits that are part of 70S ribosomes or polysomes). Required for efficient processing of 16S rRNA. May interact with the 5'-terminal helix region of 16S rRNA. This is Ribosome-binding factor A from Anaeromyxobacter dehalogenans (strain 2CP-1 / ATCC BAA-258).